The chain runs to 188 residues: GTPase KRas (188 aa).

Residues 10-18, 29-35, 59-60, and 116-119 contribute to the GTP site; these read GAGGVGKSA, VDEYDPT, AG, and NKCD. The Effector region motif lies at 32–40; sequence YDPTIEDSY. The interval 167-188 is disordered; it reads KEKMSKEGKKKKKKSKTKCILM. Cys-185 carries the post-translational modification Cysteine methyl ester. Residue Cys-185 is the site of S-farnesyl cysteine attachment. Positions 186–188 are cleaved as a propeptide — removed in mature form; sequence ILM.

It belongs to the small GTPase superfamily. Ras family.

The protein resides in the cell membrane. Its subcellular location is the cytoplasm. The catalysed reaction is GTP + H2O = GDP + phosphate + H(+). Its activity is regulated as follows. Alternates between an inactive form bound to GDP and an active form bound to GTP. Activated by a guanine nucleotide-exchange factor (GEF) and inactivated by a GTPase-activating protein (GAP). Its function is as follows. Ras proteins bind GDP/GTP and possess intrinsic GTPase activity. Plays an important role in the regulation of cell proliferation. This is GTPase KRas (kras1) from Oryzias latipes (Japanese rice fish).